The sequence spans 382 residues: Rubredoxin-NAD(+) reductase (382 aa).

FAD-binding positions include 9 to 12 (TGLA), 33 to 34 (TA), Lys42, Val80, Glu156, Asp275, Val287, and Lys318.

This sequence belongs to the FAD-dependent oxidoreductase family. As to quaternary structure, homodimer. FAD is required as a cofactor.

The protein localises to the cytoplasm. The enzyme catalyses 2 reduced [rubredoxin] + NAD(+) + H(+) = 2 oxidized [rubredoxin] + NADH. Its pathway is hydrocarbon metabolism; alkane degradation. Functionally, involved in the hydrocarbon hydroxylating system, which transfers electrons from NADH to rubredoxin reductase and then through rubredoxin to alkane 1 monooxygenase. The chain is Rubredoxin-NAD(+) reductase (rubB) from Alcanivorax borkumensis (strain ATCC 700651 / DSM 11573 / NCIMB 13689 / SK2).